The chain runs to 224 residues: MKFAVIVFPGSNCDVDCYYAVKDGLGEGVEYVWHQEKNLSKYDVIMLPGGFSYGDYLRAGAIARFSPVMEAVREEAEKGKFIIGICNGFQILTEAGLLPGALRKNEGLKFICKTVSIIVENDKTPFTTRLKKGQEILLPIAHGEGNYYVDDKTLKELKGNNQIVFRYKENINGSVERIAGVINKKGNVLGMMPHPERAYDSLLGNTDGLYILGSIVDNFVKGGV.

Residues 2–224 (KFAVIVFPGS…IVDNFVKGGV (223 aa)) enclose the Glutamine amidotransferase type-1 domain. Catalysis depends on Cys86, which acts as the Nucleophile. Active-site residues include His194 and Glu196.

Part of the FGAM synthase complex composed of 1 PurL, 1 PurQ and 2 PurS subunits.

It localises to the cytoplasm. The enzyme catalyses N(2)-formyl-N(1)-(5-phospho-beta-D-ribosyl)glycinamide + L-glutamine + ATP + H2O = 2-formamido-N(1)-(5-O-phospho-beta-D-ribosyl)acetamidine + L-glutamate + ADP + phosphate + H(+). The catalysed reaction is L-glutamine + H2O = L-glutamate + NH4(+). It participates in purine metabolism; IMP biosynthesis via de novo pathway; 5-amino-1-(5-phospho-D-ribosyl)imidazole from N(2)-formyl-N(1)-(5-phospho-D-ribosyl)glycinamide: step 1/2. In terms of biological role, part of the phosphoribosylformylglycinamidine synthase complex involved in the purines biosynthetic pathway. Catalyzes the ATP-dependent conversion of formylglycinamide ribonucleotide (FGAR) and glutamine to yield formylglycinamidine ribonucleotide (FGAM) and glutamate. The FGAM synthase complex is composed of three subunits. PurQ produces an ammonia molecule by converting glutamine to glutamate. PurL transfers the ammonia molecule to FGAR to form FGAM in an ATP-dependent manner. PurS interacts with PurQ and PurL and is thought to assist in the transfer of the ammonia molecule from PurQ to PurL. The chain is Phosphoribosylformylglycinamidine synthase subunit PurQ from Caldanaerobacter subterraneus subsp. tengcongensis (strain DSM 15242 / JCM 11007 / NBRC 100824 / MB4) (Thermoanaerobacter tengcongensis).